The sequence spans 106 residues: Small ribosomal subunit protein uS10 (106 aa).

Belongs to the universal ribosomal protein uS10 family. As to quaternary structure, part of the 30S ribosomal subunit.

In terms of biological role, involved in the binding of tRNA to the ribosomes. This chain is Small ribosomal subunit protein uS10, found in Synechococcus sp. (strain CC9311).